We begin with the raw amino-acid sequence, 306 residues long: Methionyl-tRNA formyltransferase (306 aa).

110-113 contributes to the (6S)-5,6,7,8-tetrahydrofolate binding site; that stretch reads SLLP.

The protein belongs to the Fmt family.

It catalyses the reaction L-methionyl-tRNA(fMet) + (6R)-10-formyltetrahydrofolate = N-formyl-L-methionyl-tRNA(fMet) + (6S)-5,6,7,8-tetrahydrofolate + H(+). Attaches a formyl group to the free amino group of methionyl-tRNA(fMet). The formyl group appears to play a dual role in the initiator identity of N-formylmethionyl-tRNA by promoting its recognition by IF2 and preventing the misappropriation of this tRNA by the elongation apparatus. The chain is Methionyl-tRNA formyltransferase from Brucella ovis (strain ATCC 25840 / 63/290 / NCTC 10512).